A 341-amino-acid chain; its full sequence is DNA-directed RNA polymerase subunit alpha (341 aa).

Residues 1–233 (MIRDEIPISA…NLFIPFLHAE (233 aa)) are alpha N-terminal domain (alpha-NTD). The tract at residues 265 to 341 (TKGVTFKHIF…NLPKNKLHFH (77 aa)) is alpha C-terminal domain (alpha-CTD).

It belongs to the RNA polymerase alpha chain family. As to quaternary structure, in plastids the minimal PEP RNA polymerase catalytic core is composed of four subunits: alpha, beta, beta', and beta''. When a (nuclear-encoded) sigma factor is associated with the core the holoenzyme is formed, which can initiate transcription.

It is found in the plastid. Its subcellular location is the chloroplast. It catalyses the reaction RNA(n) + a ribonucleoside 5'-triphosphate = RNA(n+1) + diphosphate. Its function is as follows. DNA-dependent RNA polymerase catalyzes the transcription of DNA into RNA using the four ribonucleoside triphosphates as substrates. This chain is DNA-directed RNA polymerase subunit alpha, found in Takakia lepidozioides (Moss).